We begin with the raw amino-acid sequence, 988 residues long: Chitin synthase 1 (988 aa).

Positions 29-75 (QHHWPPSSGSSLGRAPSIPLSSSNPRSPIRPSTPSRVSTDWTRPPAP) are disordered. Residues 44-66 (PSIPLSSSNPRSPIRPSTPSRVS) show a composition bias toward low complexity. 7 consecutive transmembrane segments (helical) span residues 577–596 (WLNGAFFAAVYALVHFKQIW), 616–636 (FISLLFTFFSLANFYLTFYFV), 656–676 (IFVILRYVCVLLICLQFILSL), 732–752 (IFTNLIVSSVSTIGLFFLMSF), 764–784 (SAQYFALLPSYICTLQVYAFC), 864–884 (YVVASYMVCNAILAMAVSEAY), and 911–931 (AIGSSAFGVINIVSAIAEGRI). The interval 950-988 (AGLGSGFSESGKTGITSGSGMSGMSLSDVTSKISEKLAG) is disordered. A compositionally biased stretch (low complexity) spans 957–976 (SESGKTGITSGSGMSGMSLS).

The protein belongs to the chitin synthase family. Class II subfamily.

Its subcellular location is the cell membrane. The enzyme catalyses [(1-&gt;4)-N-acetyl-beta-D-glucosaminyl](n) + UDP-N-acetyl-alpha-D-glucosamine = [(1-&gt;4)-N-acetyl-beta-D-glucosaminyl](n+1) + UDP + H(+). Its function is as follows. Polymerizes chitin, a structural polymer of the cell wall and septum, by transferring the sugar moiety of UDP-GlcNAc to the non-reducing end of the growing chitin polymer. CHS1 mainly responsible for normal yeast cell reproductive growth. This chain is Chitin synthase 1, found in Exophiala dermatitidis (Black yeast-like fungus).